Here is an 84-residue protein sequence, read N- to C-terminus: U21-theraphotoxin-Cg1a 2 (84 aa).

Positions 1–21 are cleaved as a signal peptide; that stretch reads MKVSVLITLAVLGVMFLFTSA. The propeptide occupies 22 to 47; the sequence is EERGSDQMDSPAWLKSMEIIFQSEER. 3 cysteine pairs are disulfide-bonded: Cys-49/Cys-63, Cys-56/Cys-68, and Cys-62/Cys-76. The residue at position 82 (Val-82) is a Valine amide.

It belongs to the neurotoxin 10 (Hwtx-1) family. 05 (F4a) subfamily. As to expression, expressed by the venom gland.

Its subcellular location is the secreted. Its function is as follows. Probable ion channel inhibitor. This Chilobrachys guangxiensis (Chinese earth tiger tarantula) protein is U21-theraphotoxin-Cg1a 2.